Consider the following 239-residue polypeptide: Sugar fermentation stimulation protein homolog (239 aa).

It belongs to the SfsA family.

This chain is Sugar fermentation stimulation protein homolog, found in Methylobacterium sp. (strain 4-46).